The primary structure comprises 471 residues: Tryptophan--tRNA ligase, cytoplasmic (471 aa).

The 57-residue stretch at 8–64 folds into the WHEP-TRS domain; it reads SLLELFNSIATQGELVRSLKAGNASKDEIDSAVKMLVSLKMSYKAAAGEDYKADCPP. Residues 59-79 form a disordered region; the sequence is KADCPPGNPAPTSNHGPDATE. N6-succinyllysine is present on lysine 154. Residues 164-173 carry the 'HIGH' region motif; that stretch reads PSSEAMHVGH. The 'KMSKS' region signature appears at 349–353; that stretch reads KMSAS. Phosphoserine is present on serine 351.

This sequence belongs to the class-I aminoacyl-tRNA synthetase family. Homodimer. Interacts with an oxidized form of GAPDH. GAPDH stimulates the aminoacylation activity of isoform 2. Post-translationally, proteolytic cleavage generates 2 forms; T1-TrpRS and T2-TrpRS.

It is found in the cytoplasm. The enzyme catalyses tRNA(Trp) + L-tryptophan + ATP = L-tryptophyl-tRNA(Trp) + AMP + diphosphate + H(+). Functionally, catalyzes the attachment of tryptophan to tRNA(Trp) in a two-step reaction: tryptophan is first activated by ATP to form Trp-AMP and then transferred to the acceptor end of the tRNA(Trp). Its function is as follows. Has no angiostatic activity. Possesses an angiostatic activity but has no aminoacylation activity. Inhibits fluid shear stress-activated responses of endothelial cells. Regulates ERK, Akt, and eNOS activation pathways that are associated with angiogenesis, cytoskeletal reorganization and shear stress-responsive gene expression. In terms of biological role, has an angiostatic activity. This is Tryptophan--tRNA ligase, cytoplasmic from Homo sapiens (Human).